A 76-amino-acid polypeptide reads, in one-letter code: Large ribosomal subunit protein uL29 (76 aa).

This sequence belongs to the universal ribosomal protein uL29 family.

The polypeptide is Large ribosomal subunit protein uL29 (Corynebacterium diphtheriae (strain ATCC 700971 / NCTC 13129 / Biotype gravis)).